A 274-amino-acid chain; its full sequence is Undecaprenyl-diphosphatase (274 aa).

A run of 8 helical transmembrane segments spans residues 1–21, 48–68, 84–104, 108–128, 143–163, 187–207, 214–234, and 254–274; these read MDWF…FLPI, VVIQ…DFAG, LGVI…GDVI, LFRP…MWVI, IGLG…LWPG, FSFY…FIKS, IGLL…YLAI, and VIFG…NGGL.

Belongs to the UppP family.

It is found in the cell membrane. The catalysed reaction is di-trans,octa-cis-undecaprenyl diphosphate + H2O = di-trans,octa-cis-undecaprenyl phosphate + phosphate + H(+). Catalyzes the dephosphorylation of undecaprenyl diphosphate (UPP). Confers resistance to bacitracin. The polypeptide is Undecaprenyl-diphosphatase (Deinococcus geothermalis (strain DSM 11300 / CIP 105573 / AG-3a)).